The following is a 407-amino-acid chain: MRVLLATCGSRGDTEPLVALAVRVRDLGADVRMCAPPDCAERLAEVGVPHVPVGPSARAPIQRAKPLTAEDVRRFTTEAIATQFDEIPAAAEGCAAVVTTGLLAAAIGVRSVAEKLGIPYFYAFHCPSYVPSPYYPPPPLGEPSTQDTIDIPAQWERNNQSAYQRYGGLLNSHRDAIGLPPVEDIFTFGYTDHPWVAADPVLAPLQPTDLDAVQTGAWILPDERPLSPELAAFLDAGPPPVYLGFGSLGAPADAVRVAIDAIRAHGRRVILSRGWADLVLPDDGADCFAIGEVNHQVLFGRVAAVIHHGGAGTTHVAARAGAPQILLPQMADQPYYAGRVAELGVGVAHDGPIPTFDSLSAALATALTPETHARATAVAGTIRTDGAAVAARLLLDAVSREKPTVSA.

The protein belongs to the glycosyltransferase 28 family.

The catalysed reaction is vancomycin aglycone + UDP-alpha-D-glucose = devancoaminyl-vancomycin + UDP. The protein operates within antibiotic biosynthesis; vancomycin biosynthesis. Functionally, glucosyltransferase that transfers glucose to the 4-OH-Phegly(4) residue of vancomycin aglycone (AGV) to produce devancoaminyl-vancomycin (DVV) in the biosynthesis of glycopeptide antibiotic chloroeremomycin, a member of the vancomycin group of antibiotics. The protein is Vancomycin aglycone glucosyltransferase (gtfB) of Amycolatopsis orientalis (Nocardia orientalis).